The chain runs to 309 residues: Dicarboxylate carrier SLC25A8 (309 aa).

Topologically, residues 1–16 are mitochondrial intermembrane; that stretch reads MVGFKATDVPPTATVK. 3 Solcar repeats span residues 11-106, 114-203, and 212-297; these read PTAT…VKQF, ASIG…IKDA, and DDLP…LKRA. Residues 16 to 63 are important for interaction with long-chain fatty acids; it reads KFLGAGTAACIADLITFPLDTAKVRLQIQGESQGPVRATASAQYRGVM. The helical transmembrane segment at 17-40 threads the bilayer; that stretch reads FLGAGTAACIADLITFPLDTAKVR. At 41–77 the chain is on the mitochondrial matrix side; it reads LQIQGESQGPVRATASAQYRGVMGTILTMVRTEGPRS. The chain crosses the membrane as a helical span at residues 78 to 103; that stretch reads LYNGLVAGLQRQMSFASVRIGLYDSV. The Mitochondrial intermembrane portion of the chain corresponds to 104-119; sequence KQFYTKGSEHASIGSR. Residues 120–145 form a helical membrane-spanning segment; it reads LLAGSTTGALAVAVAQPTDVVKVRFQ. Residues 146–173 lie on the Mitochondrial matrix side of the membrane; that stretch reads AQARAGGGRRYQSTVNAYKTIAREEGFR. The chain crosses the membrane as a helical span at residues 174-199; the sequence is GLWKGTSPNVARNAIVNCAELVTYDL. The Mitochondrial intermembrane portion of the chain corresponds to 200–217; sequence IKDALLKANLMTDDLPCH. The helical transmembrane segment at 218–242 threads the bilayer; it reads FTSAFGAGFCTTVIASPVDVVKTRY. The Mitochondrial matrix segment spans residues 243–268; it reads MNSALGQYSSAGHCALTMLQKEGPRA. The chain crosses the membrane as a helical span at residues 269 to 294; the sequence is FYKGFMPSFLRLGSWNVVMFVTYEQL. An important for interaction with long-chain fatty acids region spans residues 278–285; the sequence is LRLGSWNV. The Mitochondrial intermembrane segment spans residues 295–309; sequence KRALMAACTSREAPF.

It belongs to the mitochondrial carrier (TC 2.A.29) family. As to quaternary structure, homotetramer. Adopts an asymmetrical dimer of dimers functional form. In terms of tissue distribution, widely expressed in adult human tissues, including tissues rich in macrophages. Most expressed in white adipose tissue and skeletal muscle.

The protein localises to the mitochondrion inner membrane. It catalyses the reaction L-aspartate(out) + phosphate(in) + H(+)(in) = L-aspartate(in) + phosphate(out) + H(+)(out). The enzyme catalyses oxaloacetate(out) + phosphate(in) + H(+)(in) = oxaloacetate(in) + phosphate(out) + H(+)(out). It carries out the reaction (S)-malate(out) + phosphate(in) + H(+)(in) = (S)-malate(in) + phosphate(out) + H(+)(out). The catalysed reaction is malonate(out) + phosphate(in) + H(+)(in) = malonate(in) + phosphate(out) + H(+)(out). It catalyses the reaction sulfate(out) + phosphate(in) + H(+)(in) = sulfate(in) + phosphate(out) + H(+)(out). The enzyme catalyses (S)-malate(out) = (S)-malate(in). It carries out the reaction L-aspartate(out) = L-aspartate(in). The catalysed reaction is phosphate(in) = phosphate(out). It catalyses the reaction chloride(in) = chloride(out). The enzyme catalyses H(+)(in) = H(+)(out). It carries out the reaction a long-chain fatty acid(out) = a long-chain fatty acid(in). Inhibited by pyridoxal- 5'-phosphate, bathophenanthroline, tannic acid, bromocresol purple, butylmalonate and phenylsuccinate. Proton conductance is activated by cardiolipin and long-chain free fatty acids and inhibited by purine nucleotides ATP and ADP. Chloride ion transporter activity is inhibited by long-chain free fatty acids. Functionally, antiporter that exports dicarboxylate intermediates of the Krebs cycle in exchange for phosphate plus a proton across the inner membrane of mitochondria, a process driven by mitochondrial motive force with an overall impact on glycolysis, glutaminolysis and glutathione-dependent redox balance. Continuous export of oxaloacetate and related four-carbon dicarboxylates from mitochondrial matrix into the cytosol negatively regulates the oxidation of acetyl-CoA substrates via the Krebs cycle, lowering the ATP/ADP ratio and reactive oxygen species (ROS) production. May mediate inducible proton entry into the mitochondrial matrix affecting ATP turnover as a protection mechanism against oxidative stress. The proton currents are most likely associated with fatty acid flipping across the inner membrane of mitochondria in a metabolic process regulated by free fatty acids and purine nucleotides. Regulates the use of glucose as a source of energy. Required for glucose-induced DRP1-dependent mitochondrial fission and neuron activation in the ventromedial nucleus of the hypothalamus (VMH). This mitochondrial adaptation mechanism modulates the VMH pool of glucose-excited neurons with an impact on systemic glucose homeostasis. Regulates ROS levels and metabolic reprogramming of macrophages during the resolution phase of inflammation. Attenuates ROS production in response to IL33 to preserve the integrity of the Krebs cycle required for persistent production of itaconate and subsequent GATA3-dependent differentiation of inflammation-resolving alternatively activated macrophages. Can unidirectionally transport anions including L-malate, L-aspartate, phosphate and chloride ions. Does not mediate adaptive thermogenesis. The chain is Dicarboxylate carrier SLC25A8 (UCP2) from Homo sapiens (Human).